A 563-amino-acid polypeptide reads, in one-letter code: L-lactate permease (563 aa).

The next 14 membrane-spanning stretches (helical) occupy residues leucine 14 to isoleucine 34, methionine 37 to valine 57, alanine 73 to isoleucine 93, glycine 131 to phenylalanine 151, alanine 157 to isoleucine 177, methionine 194 to methionine 214, alanine 220 to leucine 240, leucine 249 to tryptophan 269, isoleucine 304 to proline 324, leucine 381 to isoleucine 401, leucine 419 to methionine 439, alanine 448 to isoleucine 468, valine 506 to alanine 526, and phenylalanine 542 to isoleucine 562.

It belongs to the lactate permease family.

The protein localises to the cell membrane. Its function is as follows. Is the principal permease for the uptake of L-lactate in B.subtilis. The chain is L-lactate permease (lutP) from Bacillus subtilis (strain 168).